We begin with the raw amino-acid sequence, 249 residues long: Adenosylcobinamide-GDP ribazoletransferase (249 aa).

A run of 6 helical transmembrane segments spans residues 36-56 (LVGF…HSIG), 57-77 (LNLA…GGLH), 106-126 (VGAM…AFLF), 133-153 (KLTA…LAIT), 188-208 (LWLF…ITWL), and 226-246 (GALG…GQQI).

Belongs to the CobS family. Mg(2+) serves as cofactor.

Its subcellular location is the cell membrane. It catalyses the reaction alpha-ribazole + adenosylcob(III)inamide-GDP = adenosylcob(III)alamin + GMP + H(+). The enzyme catalyses alpha-ribazole 5'-phosphate + adenosylcob(III)inamide-GDP = adenosylcob(III)alamin 5'-phosphate + GMP + H(+). Its pathway is cofactor biosynthesis; adenosylcobalamin biosynthesis; adenosylcobalamin from cob(II)yrinate a,c-diamide: step 7/7. Functionally, joins adenosylcobinamide-GDP and alpha-ribazole to generate adenosylcobalamin (Ado-cobalamin). Also synthesizes adenosylcobalamin 5'-phosphate from adenosylcobinamide-GDP and alpha-ribazole 5'-phosphate. The chain is Adenosylcobinamide-GDP ribazoletransferase from Desulforamulus reducens (strain ATCC BAA-1160 / DSM 100696 / MI-1) (Desulfotomaculum reducens).